A 59-amino-acid polypeptide reads, in one-letter code: Protein translocase subunit SecE (59 aa).

A helical membrane pass occupies residues 35–55; that stretch reads IVAIGIAIIGVVGFIIVLIGE.

Belongs to the SecE/SEC61-gamma family. Component of the Sec protein translocase complex. Heterotrimer consisting of SecY (alpha), SecG (beta) and SecE (gamma) subunits. The heterotrimers can form oligomers, although 1 heterotrimer is thought to be able to translocate proteins. Interacts with the ribosome. May interact with SecDF, and other proteins may be involved.

It localises to the cell membrane. Functionally, essential subunit of the Sec protein translocation channel SecYEG. Clamps together the 2 halves of SecY. May contact the channel plug during translocation. The chain is Protein translocase subunit SecE from Methanobrevibacter smithii (strain ATCC 35061 / DSM 861 / OCM 144 / PS).